We begin with the raw amino-acid sequence, 248 residues long: Pyridoxine 5'-phosphate synthase (248 aa).

A 3-amino-2-oxopropyl phosphate-binding site is contributed by Asn12. 14-15 (DH) is a 1-deoxy-D-xylulose 5-phosphate binding site. Arg23 is a binding site for 3-amino-2-oxopropyl phosphate. His48 functions as the Proton acceptor in the catalytic mechanism. 1-deoxy-D-xylulose 5-phosphate-binding residues include Arg50 and His55. Glu75 serves as the catalytic Proton acceptor. Thr105 contributes to the 1-deoxy-D-xylulose 5-phosphate binding site. The Proton donor role is filled by His196. 3-amino-2-oxopropyl phosphate is bound by residues Gly197 and 218–219 (GH).

This sequence belongs to the PNP synthase family. In terms of assembly, homooctamer; tetramer of dimers.

The protein resides in the cytoplasm. It carries out the reaction 3-amino-2-oxopropyl phosphate + 1-deoxy-D-xylulose 5-phosphate = pyridoxine 5'-phosphate + phosphate + 2 H2O + H(+). The protein operates within cofactor biosynthesis; pyridoxine 5'-phosphate biosynthesis; pyridoxine 5'-phosphate from D-erythrose 4-phosphate: step 5/5. Catalyzes the complicated ring closure reaction between the two acyclic compounds 1-deoxy-D-xylulose-5-phosphate (DXP) and 3-amino-2-oxopropyl phosphate (1-amino-acetone-3-phosphate or AAP) to form pyridoxine 5'-phosphate (PNP) and inorganic phosphate. The protein is Pyridoxine 5'-phosphate synthase of Pseudomonas fluorescens (strain ATCC BAA-477 / NRRL B-23932 / Pf-5).